The primary structure comprises 218 residues: MRLILLGPPGAGKGTQAAFLTQHYGIPQISTGDMLRAAVKAGTPLGLEAKKVMDAGGLVSDDLIIGLVRDRLTQPDCANGYLFDGFPRTIPQADALKSAGIALDYVVEIEVPESDIIERMSERRVHPASGRSYHVRFNPPKAEGVDDVTGEPLVQRDDDREETVRHRLNVYQNQTRPLVDYYSSWAQSDAAAAPKYRKISGVGSVDEIKSRLSQALQS.

Residue 10-15 coordinates ATP; sequence GAGKGT. The tract at residues 30-59 is NMP; the sequence is STGDMLRAAVKAGTPLGLEAKKVMDAGGLV. Residues Thr31, Arg36, 57–59, 85–88, and Gln92 each bind AMP; these read GLV and GFPR. The tract at residues 122–159 is LID; it reads ERRVHPASGRSYHVRFNPPKAEGVDDVTGEPLVQRDDD. Residues Arg123 and 132–133 contribute to the ATP site; that span reads SY. AMP is bound by residues Arg156 and Arg167. Residue Gly203 participates in ATP binding.

It belongs to the adenylate kinase family. In terms of assembly, monomer.

It is found in the cytoplasm. It carries out the reaction AMP + ATP = 2 ADP. The protein operates within purine metabolism; AMP biosynthesis via salvage pathway; AMP from ADP: step 1/1. Functionally, catalyzes the reversible transfer of the terminal phosphate group between ATP and AMP. Plays an important role in cellular energy homeostasis and in adenine nucleotide metabolism. The sequence is that of Adenylate kinase from Bordetella pertussis (strain Tohama I / ATCC BAA-589 / NCTC 13251).